Reading from the N-terminus, the 255-residue chain is Small ribosomal subunit protein eS1 (255 aa).

A compositionally biased stretch (basic residues) spans 1–18; sequence MAVGKNKRLSKGKKGLKK. Residues 1–28 are disordered; the sequence is MAVGKNKRLSKGKKGLKKRTQDPFSRKD. Alanine 2 carries the post-translational modification N-acetylalanine; partial. Basic and acidic residues predominate over residues 19–28; it reads RTQDPFSRKD.

The protein belongs to the eukaryotic ribosomal protein eS1 family. As to quaternary structure, component of the small ribosomal subunit. Mature ribosomes consist of a small (40S) and a large (60S) subunit. The 40S subunit contains about 33 different proteins and 1 molecule of RNA (18S). The 60S subunit contains about 49 different proteins and 3 molecules of RNA (25S, 5.8S and 5S).

It localises to the cytoplasm. In Paracoccidioides lutzii (strain ATCC MYA-826 / Pb01) (Paracoccidioides brasiliensis), this protein is Small ribosomal subunit protein eS1.